The following is a 349-amino-acid chain: Protein-glutamate methylesterase/protein-glutamine glutaminase (349 aa).

The Response regulatory domain maps to Arg-5–Met-122. The residue at position 56 (Asp-56) is a 4-aspartylphosphate. The CheB-type methylesterase domain occupies Leu-152–Gly-344. Active-site residues include Ser-164, His-190, and Asp-286.

It belongs to the CheB family. Post-translationally, phosphorylated by CheA. Phosphorylation of the N-terminal regulatory domain activates the methylesterase activity.

Its subcellular location is the cytoplasm. The catalysed reaction is [protein]-L-glutamate 5-O-methyl ester + H2O = L-glutamyl-[protein] + methanol + H(+). The enzyme catalyses L-glutaminyl-[protein] + H2O = L-glutamyl-[protein] + NH4(+). Functionally, involved in chemotaxis. Part of a chemotaxis signal transduction system that modulates chemotaxis in response to various stimuli. Catalyzes the demethylation of specific methylglutamate residues introduced into the chemoreceptors (methyl-accepting chemotaxis proteins or MCP) by CheR. Also mediates the irreversible deamidation of specific glutamine residues to glutamic acid. The sequence is that of Protein-glutamate methylesterase/protein-glutamine glutaminase from Salmonella paratyphi A (strain ATCC 9150 / SARB42).